The primary structure comprises 166 residues: Succinate dehydrogenase assembly factor 2, mitochondrial (166 aa).

A mitochondrion-targeting transit peptide spans 1–29; sequence MAVVAVFPALARMLAVSRRRLVSPSLSMT.

This sequence belongs to the SDHAF2 family. As to quaternary structure, interacts with SDHA within the SDH catalytic dimer.

It is found in the mitochondrion matrix. Plays an essential role in the assembly of succinate dehydrogenase (SDH), an enzyme complex (also referred to as respiratory complex II) that is a component of both the tricarboxylic acid (TCA) cycle and the mitochondrial electron transport chain, and which couples the oxidation of succinate to fumarate with the reduction of ubiquinone (coenzyme Q) to ubiquinol. Required for flavinylation (covalent attachment of FAD) of the flavoprotein subunit SDHA of the SDH catalytic dimer. The sequence is that of Succinate dehydrogenase assembly factor 2, mitochondrial from Bos taurus (Bovine).